The primary structure comprises 309 residues: Aspartate carbamoyltransferase catalytic subunit (309 aa).

Residues R54 and T55 each coordinate carbamoyl phosphate. K82 lines the L-aspartate pocket. Carbamoyl phosphate is bound by residues R104, H132, and Q135. R165 and R219 together coordinate L-aspartate. Carbamoyl phosphate contacts are provided by G260 and P261.

The protein belongs to the aspartate/ornithine carbamoyltransferase superfamily. ATCase family. In terms of assembly, heterododecamer (2C3:3R2) of six catalytic PyrB chains organized as two trimers (C3), and six regulatory PyrI chains organized as three dimers (R2).

The catalysed reaction is carbamoyl phosphate + L-aspartate = N-carbamoyl-L-aspartate + phosphate + H(+). It functions in the pathway pyrimidine metabolism; UMP biosynthesis via de novo pathway; (S)-dihydroorotate from bicarbonate: step 2/3. Functionally, catalyzes the condensation of carbamoyl phosphate and aspartate to form carbamoyl aspartate and inorganic phosphate, the committed step in the de novo pyrimidine nucleotide biosynthesis pathway. This Parafrankia sp. (strain EAN1pec) protein is Aspartate carbamoyltransferase catalytic subunit.